The sequence spans 241 residues: Small ribosomal subunit protein uS2 (241 aa).

Belongs to the universal ribosomal protein uS2 family.

This chain is Small ribosomal subunit protein uS2, found in Yersinia pestis bv. Antiqua (strain Antiqua).